Here is a 364-residue protein sequence, read N- to C-terminus: Probable tartrate dehydrogenase/decarboxylase TtuC (364 aa).

The Mn(2+) site is built by Asp-222, Asp-246, and Asp-250.

This sequence belongs to the isocitrate and isopropylmalate dehydrogenases family. Mg(2+) is required as a cofactor. The cofactor is Mn(2+). K(+) serves as cofactor.

Its subcellular location is the cytoplasm. The enzyme catalyses tartrate + NAD(+) = 2-hydroxy-3-oxosuccinate + NADH + H(+). It carries out the reaction (2R,3S)-tartrate + NAD(+) = 2-hydroxy-3-oxosuccinate + NADH + H(+). The catalysed reaction is (2R,3R)-tartrate + NAD(+) = 2-hydroxy-3-oxosuccinate + NADH + H(+). It catalyses the reaction (2R,3R)-tartrate + H(+) = (R)-glycerate + CO2. The enzyme catalyses (R)-malate + NAD(+) = pyruvate + CO2 + NADH. It functions in the pathway carbohydrate acid metabolism; tartrate degradation; 2-hydroxy-3-oxosuccinate from L-tartrate: step 1/1. The protein operates within carbohydrate acid metabolism; tartrate degradation; 2-hydroxy-3-oxosuccinate from meso-tartrate: step 1/1. Its pathway is carbohydrate acid metabolism; tartrate degradation; D-glycerate from L-tartrate: step 1/1. Its function is as follows. Has multiple catalytic activities. Apart from catalyzing the oxidation of (+)-tartrate to oxaloglycolate, also converts meso-tartrate to D-glycerate and catalyzes the oxidative decarboxylation of D-malate to pyruvate. The polypeptide is Probable tartrate dehydrogenase/decarboxylase TtuC (ttuC) (Agrobacterium vitis (Rhizobium vitis)).